The sequence spans 273 residues: Undecaprenyl-diphosphatase (273 aa).

The next 7 membrane-spanning stretches (helical) occupy residues 4–24 (LILI…FLPI), 43–63 (KAQV…CWEY), 82–102 (FVLN…LFIK), 108–128 (LFHP…ILWA), 183–203 (AAEF…FYDV), 217–237 (MFVV…RGFI), and 253–273 (IGFG…WSAG).

It belongs to the UppP family.

The protein localises to the cell inner membrane. The catalysed reaction is di-trans,octa-cis-undecaprenyl diphosphate + H2O = di-trans,octa-cis-undecaprenyl phosphate + phosphate + H(+). In terms of biological role, catalyzes the dephosphorylation of undecaprenyl diphosphate (UPP). Confers resistance to bacitracin. The sequence is that of Undecaprenyl-diphosphatase from Nitrosomonas eutropha (strain DSM 101675 / C91 / Nm57).